A 359-amino-acid chain; its full sequence is Nicotinate-nucleotide--dimethylbenzimidazole phosphoribosyltransferase (359 aa).

Glu-318 serves as the catalytic Proton acceptor.

The protein belongs to the CobT family. In terms of assembly, homodimer.

It catalyses the reaction 5,6-dimethylbenzimidazole + nicotinate beta-D-ribonucleotide = alpha-ribazole 5'-phosphate + nicotinate + H(+). Its pathway is nucleoside biosynthesis; alpha-ribazole biosynthesis; alpha-ribazole from 5,6-dimethylbenzimidazole: step 1/2. Catalyzes the synthesis of alpha-ribazole-5'-phosphate from nicotinate mononucleotide (NAMN) and 5,6-dimethylbenzimidazole (DMB). The polypeptide is Nicotinate-nucleotide--dimethylbenzimidazole phosphoribosyltransferase (Escherichia coli O157:H7).